A 612-amino-acid polypeptide reads, in one-letter code: MQAHFASEFMLSLAHALESQLRAAIDRAFPEAAASARESGTGLDPQLAPASKPEFGDFQANAALPLAKPLKQPPRQIAAAIVDQLMVDTAFTAICLTPEIAGPGFINLTVRPECLAAEVQARLADARLGVPLVEGDNDGQQPTPVVVDFSSPNIAKEMHVGHLRSTIIGDSLARVLEFRGHPVLRLNHVGDWGTQFGMLITHLKQVAPEALETADAVDLGDLVVFYRQAKQRFDDDEAFQTTSREEVVKLQGGDPISLKAWSLLCDQSRREFQKIYDRLDVRLNERGESFYNAYLESVVEDLNVSGLLVSDDGAQCVFLEGVTGKDGKPLPVIVQKSDGGFNYATTDLAAMRYRFAAPPQGDGARRVIYVTDAGQANHFAGVFQVAQRAGWIPDAGRLQHVPFGLVQGEDGKKLKTRAGDTVRLRELLDEAVERAESDLRRRLQEEGRDEDESFIEQVATTVGLAAVKYADLSQNRITNYQFSFDRMLALQGNTAPYLLYAVVRIAGIARKGGDLDVTTAELQFSETQEWALVRELLKFDAVIAEVEEELLPNRLCTYLFELSQVFNRFYDQVPVLKAEQPSRSCRLALCRLTADTLKLGLSLLGIPTLERM.

A 'HIGH' region motif is present at residues 152 to 162 (PNIAKEMHVGH).

The protein belongs to the class-I aminoacyl-tRNA synthetase family. Monomer.

It localises to the cytoplasm. It carries out the reaction tRNA(Arg) + L-arginine + ATP = L-arginyl-tRNA(Arg) + AMP + diphosphate. This is Arginine--tRNA ligase from Prochlorococcus marinus (strain MIT 9313).